Here is a 230-residue protein sequence, read N- to C-terminus: Triggering receptor expressed on myeloid cells 1 (230 aa).

A signal peptide spans 1–20; the sequence is MRKAGLWGLLCVFFVSEVKA. Residues 21–124 form the Ig-like V-type domain; sequence AIVLEEERYD…IYHPPNDPVV (104 aa). At 21 to 202 the chain is on the extracellular side; sequence AIVLEEERYD…TDADSVSTSS (182 aa). An intrachain disulfide couples C41 to C113. N-linked (GlcNAc...) asparagine glycosylation occurs at N191. The helical transmembrane segment at 203–223 threads the bilayer; sequence VTISVICGLLSKSLVFIILFI. At 224–230 the chain is on the cytoplasmic side; the sequence is VTKRTFG.

Monomer. Homomultimer; when activated. Interacts with TYROBP/DAP12. Interacts with TLR4.

The protein localises to the cell membrane. Functionally, cell surface receptor that plays important roles in innate and adaptive immunity by amplifying inflammatory responses. Upon activation by various ligands such as PGLYRP1, HMGB1 or HSP70, multimerizes and forms a complex with transmembrane adapter TYROBP/DAP12. In turn, initiates a SYK-mediated cascade of tyrosine phosphorylation, activating multiple downstream mediators such as BTK, MAPK1, MAPK3 or phospholipase C-gamma. This cascade promotes the neutrophil- and macrophage-mediated release of pro-inflammatory cytokines and/or chemokines, as well as their migration and thereby amplifies inflammatory responses that are triggered by bacterial and fungal infections. By also promoting the amplification of inflammatory signals that are initially triggered by Toll-like receptor (TLR) and NOD-like receptor engagement, plays a major role in the pathophysiology of acute and chronic inflammatory diseases of different etiologies including septic shock and atherosclerosis. This Mus musculus (Mouse) protein is Triggering receptor expressed on myeloid cells 1 (Trem1).